The chain runs to 889 residues: Chromatin structure-remodeling complex subunit RSC2 (889 aa).

The 109-residue stretch at 12-120 folds into the Bromo 1 domain; that stretch reads QNSSALYKDL…KYLKDTIYPN (109 aa). Residues 151 to 268 are disordered; it reads EKAEEVARAN…QVSRTQVKRG (118 aa). Positions 158–174 are enriched in low complexity; the sequence is RANAARAESSSSMNSTE. A compositionally biased stretch (acidic residues) spans 197 to 209; it reads NNDEDYEATDMDI. Basic and acidic residues predominate over residues 210-222; sequence DNPKDADFPDLIR. Over residues 241 to 250 the composition is skewed to polar residues; it reads STTPSHSGTP. A compositionally biased stretch (basic residues) spans 255-268; that stretch reads PRHRQVSRTQVKRG. A Bromo 2 domain is found at 280-382; that stretch reads RMKNVMKVLK…KTFTSLARFE (103 aa). Residues 408 to 526 form the BAH domain; that stretch reads ISYHVGDWAL…ESDKIFNKIR (119 aa). The disordered stretch occupies residues 601–624; sequence GEYATSDDCPRYIIRPNDSPEEGQ. Phosphotyrosine is present on Tyr612. Ser682 bears the Phosphoserine mark. Residues 831-865 are disordered; sequence EVEETMEDVTGKDKDDDGLEPDVENEKESLPGPFV.

This sequence belongs to the RSC1 family. Component of the two forms of the RSC complex composed of at least either RSC1 or RSC2, and ARP7, ARP9, LDB7, NPL6, RSC3, RSC30, RSC4, RSC58, RSC6, RSC8, RSC9, SFH1, STH1, HTL1 and probably RTT102. The complexes interact with histone and histone variant components of centromeric chromatin.

It is found in the nucleus. Its function is as follows. Component of the chromatin structure remodeling complex (RSC), which is involved in transcription regulation and nucleosome positioning. RSC is responsible for the transfer of a histone octamer from a nucleosome core particle to naked DNA. The reaction requires ATP and involves an activated RSC-nucleosome intermediate. Remodeling reaction also involves DNA translocation, DNA twist and conformational change. As a reconfigurer of centromeric and flanking nucleosomes, RSC complex is required both for proper kinetochore function in chromosome segregation and, via a PKC1-dependent signaling pathway, for organization of the cellular cytoskeleton. This subunit is involved in meiotic sporulation through regulating IME2 expression, and is also essential for 2-micron plasmid maintenance and for normal REP1 protein localization. In Saccharomyces cerevisiae (strain ATCC 204508 / S288c) (Baker's yeast), this protein is Chromatin structure-remodeling complex subunit RSC2 (RSC2).